The chain runs to 478 residues: Transposase for insertion sequence element IS231E (478 aa).

The protein belongs to the transposase 11 family.

Its function is as follows. Involved in the transposition of the insertion sequence. The chain is Transposase for insertion sequence element IS231E from Bacillus thuringiensis subsp. finitimus.